We begin with the raw amino-acid sequence, 442 residues long: tRNA-2-methylthio-N(6)-dimethylallyladenosine synthase (442 aa).

The MTTase N-terminal domain occupies 5-122 (KRIFIKTFGC…LPDMIESKRR (118 aa)). The [4Fe-4S] cluster site is built by Cys-14, Cys-51, Cys-85, Cys-159, Cys-163, and Cys-166. The Radical SAM core domain maps to 145–377 (RVEGAAAFLS…QALNEAQGKA (233 aa)). One can recognise a TRAM domain in the interval 380-442 (ASMVGSIQRV…LSHTLRGELV (63 aa)).

It belongs to the methylthiotransferase family. MiaB subfamily. In terms of assembly, monomer. The cofactor is [4Fe-4S] cluster.

It is found in the cytoplasm. The catalysed reaction is N(6)-dimethylallyladenosine(37) in tRNA + (sulfur carrier)-SH + AH2 + 2 S-adenosyl-L-methionine = 2-methylsulfanyl-N(6)-dimethylallyladenosine(37) in tRNA + (sulfur carrier)-H + 5'-deoxyadenosine + L-methionine + A + S-adenosyl-L-homocysteine + 2 H(+). Functionally, catalyzes the methylthiolation of N6-(dimethylallyl)adenosine (i(6)A), leading to the formation of 2-methylthio-N6-(dimethylallyl)adenosine (ms(2)i(6)A) at position 37 in tRNAs that read codons beginning with uridine. The protein is tRNA-2-methylthio-N(6)-dimethylallyladenosine synthase of Methylobacillus flagellatus (strain ATCC 51484 / DSM 6875 / VKM B-1610 / KT).